A 242-amino-acid chain; its full sequence is Uridylate kinase (242 aa).

16–19 serves as a coordination point for ATP; the sequence is KVSG. UMP is bound at residue G58. ATP is bound by residues G59 and R63. UMP is bound by residues D78 and 139 to 146; that span reads TGNPFCTT. ATP contacts are provided by T166, Q167, Y172, and D175.

Belongs to the UMP kinase family. In terms of assembly, homohexamer.

The protein resides in the cytoplasm. The enzyme catalyses UMP + ATP = UDP + ADP. It participates in pyrimidine metabolism; CTP biosynthesis via de novo pathway; UDP from UMP (UMPK route): step 1/1. With respect to regulation, inhibited by UTP. In terms of biological role, catalyzes the reversible phosphorylation of UMP to UDP. This is Uridylate kinase from Rickettsia canadensis (strain McKiel).